A 318-amino-acid polypeptide reads, in one-letter code: Thymidylate synthase (318 aa).

DUMP is bound by residues Arg25 and 180–181; that span reads RR. The Nucleophile role is filled by Cys200. DUMP is bound by residues 220 to 223, Asn231, and 261 to 263; these read RSGD and HIY. Residue Asp223 participates in (6R)-5,10-methylene-5,6,7,8-tetrahydrofolate binding. Ala317 contacts (6R)-5,10-methylene-5,6,7,8-tetrahydrofolate.

Belongs to the thymidylate synthase family. Bacterial-type ThyA subfamily. Homodimer.

It localises to the cytoplasm. The catalysed reaction is dUMP + (6R)-5,10-methylene-5,6,7,8-tetrahydrofolate = 7,8-dihydrofolate + dTMP. The protein operates within pyrimidine metabolism; dTTP biosynthesis. Functionally, catalyzes the reductive methylation of 2'-deoxyuridine-5'-monophosphate (dUMP) to 2'-deoxythymidine-5'-monophosphate (dTMP) while utilizing 5,10-methylenetetrahydrofolate (mTHF) as the methyl donor and reductant in the reaction, yielding dihydrofolate (DHF) as a by-product. This enzymatic reaction provides an intracellular de novo source of dTMP, an essential precursor for DNA biosynthesis. The protein is Thymidylate synthase of Lactobacillus delbrueckii subsp. bulgaricus (strain ATCC BAA-365 / Lb-18).